The primary structure comprises 203 residues: NADH dehydrogenase [ubiquinone] 1 alpha subcomplex assembly factor 4 (203 aa).

This sequence belongs to the NDUFAF4 family. In terms of assembly, together with NdufAF3 associates with mitochondrial complex I assembly intermediates during its biogenesis.

Involved in the assembly of mitochondrial NADH:ubiquinone oxidoreductase complex (complex I). Together with NdufAF3, involved in biogenesis of complex 1 modules N, Q and P-peripheral, but not the P-distal module. Required for recruitment of the complex I assembly factor Timmdc1 to complex 1 assembly intermediates. In Drosophila melanogaster (Fruit fly), this protein is NADH dehydrogenase [ubiquinone] 1 alpha subcomplex assembly factor 4.